The chain runs to 394 residues: Mannosyl-3-phosphoglycerate synthase (394 aa).

Belongs to the glycosyltransferase 2 family.

It is found in the cytoplasm. The catalysed reaction is (2R)-3-phosphoglycerate + GDP-alpha-D-mannose = 2-O-(alpha-D-mannosyl)-3-phosphoglycerate + GDP + H(+). The protein operates within carbohydrate biosynthesis; 2-(alpha-D-mannosyl)-D-glycerate biosynthesis; 2-(alpha-D-mannosyl)-D-glycerate from GDP-alpha-D-mannose (MPG route): step 1/2. Transfers a mannosyl group from GDP-mannose to phosphoglycerate to form mannosyl-3-phosphoglycerate (MPG). The polypeptide is Mannosyl-3-phosphoglycerate synthase (mngA) (Pyrococcus furiosus (strain ATCC 43587 / DSM 3638 / JCM 8422 / Vc1)).